Reading from the N-terminus, the 467-residue chain is 3-isopropylmalate dehydratase large subunit (467 aa).

Residues C349, C409, and C412 each contribute to the [4Fe-4S] cluster site.

This sequence belongs to the aconitase/IPM isomerase family. LeuC type 1 subfamily. Heterodimer of LeuC and LeuD. [4Fe-4S] cluster is required as a cofactor.

The catalysed reaction is (2R,3S)-3-isopropylmalate = (2S)-2-isopropylmalate. Its pathway is amino-acid biosynthesis; L-leucine biosynthesis; L-leucine from 3-methyl-2-oxobutanoate: step 2/4. Functionally, catalyzes the isomerization between 2-isopropylmalate and 3-isopropylmalate, via the formation of 2-isopropylmaleate. The polypeptide is 3-isopropylmalate dehydratase large subunit (Ruegeria sp. (strain TM1040) (Silicibacter sp.)).